Reading from the N-terminus, the 465-residue chain is Probable Xaa-Pro aminopeptidase pepP (465 aa).

Mn(2+) contacts are provided by D263, D274, E397, and E437.

This sequence belongs to the peptidase M24B family. Mn(2+) serves as cofactor.

The catalysed reaction is Release of any N-terminal amino acid, including proline, that is linked to proline, even from a dipeptide or tripeptide.. Catalyzes the removal of a penultimate prolyl residue from the N-termini of peptides. The protein is Probable Xaa-Pro aminopeptidase pepP (pepP) of Penicillium rubens (strain ATCC 28089 / DSM 1075 / NRRL 1951 / Wisconsin 54-1255) (Penicillium chrysogenum).